A 399-amino-acid chain; its full sequence is Dual-specificity RNA methyltransferase RlmN (399 aa).

Glu-122 functions as the Proton acceptor in the catalytic mechanism. Residues 128–371 enclose the Radical SAM core domain; sequence ETDRGTLCVS…VRTPRGRDIL (244 aa). A disulfide bond links Cys-135 and Cys-374. [4Fe-4S] cluster is bound by residues Cys-142, Cys-146, and Cys-149. Residues 200–201, Ser-232, 254–256, and Asn-331 contribute to the S-adenosyl-L-methionine site; these read GE and SLH. The S-methylcysteine intermediate role is filled by Cys-374.

Belongs to the radical SAM superfamily. RlmN family. The cofactor is [4Fe-4S] cluster.

It localises to the cytoplasm. It catalyses the reaction adenosine(2503) in 23S rRNA + 2 reduced [2Fe-2S]-[ferredoxin] + 2 S-adenosyl-L-methionine = 2-methyladenosine(2503) in 23S rRNA + 5'-deoxyadenosine + L-methionine + 2 oxidized [2Fe-2S]-[ferredoxin] + S-adenosyl-L-homocysteine. The enzyme catalyses adenosine(37) in tRNA + 2 reduced [2Fe-2S]-[ferredoxin] + 2 S-adenosyl-L-methionine = 2-methyladenosine(37) in tRNA + 5'-deoxyadenosine + L-methionine + 2 oxidized [2Fe-2S]-[ferredoxin] + S-adenosyl-L-homocysteine. Its function is as follows. Specifically methylates position 2 of adenine 2503 in 23S rRNA and position 2 of adenine 37 in tRNAs. m2A2503 modification seems to play a crucial role in the proofreading step occurring at the peptidyl transferase center and thus would serve to optimize ribosomal fidelity. The protein is Dual-specificity RNA methyltransferase RlmN of Rhodopseudomonas palustris (strain TIE-1).